A 555-amino-acid chain; its full sequence is Urocanate hydratase (555 aa).

Residues 52 to 53 (GG), glutamine 130, 176 to 178 (GMG), glutamate 196, arginine 201, 242 to 243 (NA), 263 to 267 (QTSAH), 273 to 274 (YL), and tyrosine 322 each bind NAD(+). Cysteine 410 is a catalytic residue. Glycine 492 contributes to the NAD(+) binding site.

It belongs to the urocanase family. Requires NAD(+) as cofactor.

The protein resides in the cytoplasm. The enzyme catalyses 4-imidazolone-5-propanoate = trans-urocanate + H2O. The protein operates within amino-acid degradation; L-histidine degradation into L-glutamate; N-formimidoyl-L-glutamate from L-histidine: step 2/3. Its function is as follows. Catalyzes the conversion of urocanate to 4-imidazolone-5-propionate. The sequence is that of Urocanate hydratase from Shewanella putrefaciens (strain CN-32 / ATCC BAA-453).